The sequence spans 206 residues: Twist-related protein 1 (206 aa).

Residues 1-18 show a composition bias toward low complexity; the sequence is MMQDVSSSPVSPADDSLS. A disordered region spans residues 1–109; the sequence is MMQDVSSSPV…GGGSPQSYEE (109 aa). Basic residues predominate over residues 34–43; the sequence is RGARKRRSSR. Gly residues-rich tracts occupy residues 48–65 and 78–103; these read GSAG…GGDE and SAGG…GGGS. Residues 112–163 form the bHLH domain; the sequence is TQRVMANVRERQRTQSLNEAFAALRKIIPTLPSDKLSKIQTLKLAARYIDFL. The sufficient for transactivation activity stretch occupies residues 165–195; it reads QVLQSDELDSKMASCSYVAHERLSYAFSVWR.

Efficient DNA binding requires dimerization with another bHLH protein. Homodimer or heterodimer with E proteins such as TCF3. ID1 binds preferentially to TCF3 but does not interact efficiently with TWIST1 so ID1 levels control the amount of TCF3 available to dimerize with TWIST1 and thus determine the type of dimer formed. Subset of mesodermal cells.

It localises to the nucleus. Acts as a transcriptional regulator. Inhibits myogenesis by sequestrating E proteins, inhibiting trans-activation by MEF2, and inhibiting DNA-binding by MYOD1 through physical interaction. This interaction probably involves the basic domains of both proteins. Also represses expression of pro-inflammatory cytokines such as TNFA and IL1B. Regulates cranial suture patterning and fusion. Activates transcription as a heterodimer with E proteins. Regulates gene expression differentially, depending on dimer composition. Homodimers induce expression of FGFR2 and POSTN while heterodimers repress FGFR2 and POSTN expression and induce THBS1 expression. Heterodimerization is also required for osteoblast differentiation. Represses the activity of the circadian transcriptional activator: NPAS2-BMAL1 heterodimer. The chain is Twist-related protein 1 (Twist1) from Mus musculus (Mouse).